The chain runs to 126 residues: Glycine cleavage system H protein (126 aa).

A Lipoyl-binding domain is found at 22-104; that stretch reads TVTIGITEYA…YEKAWMVKVE (83 aa). K63 is subject to N6-lipoyllysine.

The protein belongs to the GcvH family. As to quaternary structure, the glycine cleavage system is composed of four proteins: P, T, L and H. (R)-lipoate is required as a cofactor.

In terms of biological role, the glycine cleavage system catalyzes the degradation of glycine. The H protein shuttles the methylamine group of glycine from the P protein to the T protein. Functionally, is also involved in protein lipoylation via its role as an octanoyl/lipoyl carrier protein intermediate. The chain is Glycine cleavage system H protein from Staphylococcus saprophyticus subsp. saprophyticus (strain ATCC 15305 / DSM 20229 / NCIMB 8711 / NCTC 7292 / S-41).